Consider the following 389-residue polypeptide: Phospho-N-acetylmuramoyl-pentapeptide-transferase (389 aa).

Helical transmembrane passes span 25 to 45, 74 to 94, 97 to 117, 134 to 154, 167 to 187, 190 to 210, 222 to 242, 259 to 279, 286 to 306, 311 to 331, and 366 to 386; these read RAVM…PWVI, MGGV…CDWG, FIWV…VDDY, FFWQ…SVSE, WIEG…VPFF, VSYP…IVGS, GLVI…AYVM, AGEL…FLWF, VFMG…VAVI, IVLF…MLQV, and QVTV…LSSL.

It belongs to the glycosyltransferase 4 family. MraY subfamily. Mg(2+) is required as a cofactor.

Its subcellular location is the cell inner membrane. The enzyme catalyses UDP-N-acetyl-alpha-D-muramoyl-L-alanyl-gamma-D-glutamyl-meso-2,6-diaminopimeloyl-D-alanyl-D-alanine + di-trans,octa-cis-undecaprenyl phosphate = di-trans,octa-cis-undecaprenyl diphospho-N-acetyl-alpha-D-muramoyl-L-alanyl-D-glutamyl-meso-2,6-diaminopimeloyl-D-alanyl-D-alanine + UMP. The protein operates within cell wall biogenesis; peptidoglycan biosynthesis. Functionally, catalyzes the initial step of the lipid cycle reactions in the biosynthesis of the cell wall peptidoglycan: transfers peptidoglycan precursor phospho-MurNAc-pentapeptide from UDP-MurNAc-pentapeptide onto the lipid carrier undecaprenyl phosphate, yielding undecaprenyl-pyrophosphoryl-MurNAc-pentapeptide, known as lipid I. The protein is Phospho-N-acetylmuramoyl-pentapeptide-transferase of Cupriavidus metallidurans (strain ATCC 43123 / DSM 2839 / NBRC 102507 / CH34) (Ralstonia metallidurans).